The chain runs to 179 residues: ATP-dependent protease subunit HslV (179 aa).

Residue T7 is part of the active site. Na(+) contacts are provided by A162, C165, and T168.

The protein belongs to the peptidase T1B family. HslV subfamily. A double ring-shaped homohexamer of HslV is capped on each side by a ring-shaped HslU homohexamer. The assembly of the HslU/HslV complex is dependent on binding of ATP.

The protein localises to the cytoplasm. It carries out the reaction ATP-dependent cleavage of peptide bonds with broad specificity.. Its activity is regulated as follows. Allosterically activated by HslU binding. Functionally, protease subunit of a proteasome-like degradation complex believed to be a general protein degrading machinery. This Nitrosococcus oceani (strain ATCC 19707 / BCRC 17464 / JCM 30415 / NCIMB 11848 / C-107) protein is ATP-dependent protease subunit HslV.